The sequence spans 517 residues: Putative thymidine phosphorylase (517 aa).

This sequence belongs to the thymidine/pyrimidine-nucleoside phosphorylase family. Type 2 subfamily.

It catalyses the reaction thymidine + phosphate = 2-deoxy-alpha-D-ribose 1-phosphate + thymine. This chain is Putative thymidine phosphorylase, found in Legionella pneumophila (strain Paris).